A 257-amino-acid chain; its full sequence is MALPEFSMRQLLEAGVHFGHQTQRWNPRMSPFIYGARNGIHILDLTQTVPMLDQALKAVRDTVAKGGRVLFVGTKRQASGPIAEAAEKSAQYYMNHRWLGGTLTNWKTVSQSIQRLRMIDEKMEGGAEGLTKKERLGMERDQAKLQASLGGIREMGGVPDLLFVIDVKKEALAIAEANKLGIPVVAVVDTNCSPDGVDYIIPGNDDAARAISLYCDLAARAALDGMTAQLGAAGVDLGELEEAPAEEALAEEAAAEA.

Belongs to the universal ribosomal protein uS2 family.

This Ruegeria pomeroyi (strain ATCC 700808 / DSM 15171 / DSS-3) (Silicibacter pomeroyi) protein is Small ribosomal subunit protein uS2.